We begin with the raw amino-acid sequence, 392 residues long: Heat-inducible transcription repressor HrcA (392 aa).

This sequence belongs to the HrcA family.

Negative regulator of class I heat shock genes (grpE-dnaK-dnaJ and groELS operons). Prevents heat-shock induction of these operons. This Chlamydia trachomatis serovar D (strain ATCC VR-885 / DSM 19411 / UW-3/Cx) protein is Heat-inducible transcription repressor HrcA.